Reading from the N-terminus, the 545-residue chain is Chaperonin GroEL (545 aa).

ATP-binding positions include T29–P32, K50, D86–T90, G413, and D495.

Belongs to the chaperonin (HSP60) family. As to quaternary structure, forms a cylinder of 14 subunits composed of two heptameric rings stacked back-to-back. Interacts with the co-chaperonin GroES.

The protein localises to the cytoplasm. It catalyses the reaction ATP + H2O + a folded polypeptide = ADP + phosphate + an unfolded polypeptide.. Its function is as follows. Together with its co-chaperonin GroES, plays an essential role in assisting protein folding. The GroEL-GroES system forms a nano-cage that allows encapsulation of the non-native substrate proteins and provides a physical environment optimized to promote and accelerate protein folding. The protein is Chaperonin GroEL of Borreliella burgdorferi (strain ATCC 35210 / DSM 4680 / CIP 102532 / B31) (Borrelia burgdorferi).